Reading from the N-terminus, the 766-residue chain is Hypoxia-inducible factor 1-alpha (766 aa).

The segment at 1–26 is disordered; the sequence is MDTGVVPEKKSRVSSDRRKEKSRDAA. Residues 7–26 show a composition bias toward basic and acidic residues; sequence PEKKSRVSSDRRKEKSRDAA. Residues 17–70 enclose the bHLH domain; the sequence is RRKEKSRDAARCRRGKESEVFYELAQELPLPHSVTSNLDKASIMRLAISYLHMR. 2 consecutive PAS domains span residues 82-159 and 230-300; these read EERE…TSKK and PHPS…FAKG. The PAC domain maps to 304–347; that stretch reads TGQYRMLAKRGGFVWVETQATVIYNNKNSQPQCVVCVNYVLSGI. The interval 361–383 is disordered; the sequence is DMRPVKKELEEEESSEPEVSPVL. Position 426 is a 4-hydroxyproline (P426). Residues 475-509 are disordered; it reads DQHLVPNTSVDTTEVSTGPDSSSTPGSHSFTEPDS. The span at 479–489 shows a compositional bias: polar residues; the sequence is VPNTSVDTTEV. A compositionally biased stretch (low complexity) spans 490-503; sequence STGPDSSSTPGSHS. Residue P559 is modified to 4-hydroxyproline. The short motif at 718–721 is the Nuclear localization signal element; that stretch reads LLGI. N743 is subject to (3S)-3-hydroxyasparagine.

As to quaternary structure, efficient DNA binding requires heterodimerization of an alpha and a beta/ARNT subunit. In normoxia, is hydroxylated on Pro-426 and Pro-559. The hydroxylated prolines promote interaction with VHL, initiating rapid ubiquitination and subsequent proteasomal degradation. Under hypoxia, proline hydroxylation is impaired and ubiquitination is attenuated, resulting in stabilization. Post-translationally, in normoxia, is hydroxylated on Asn-743, thus abrogating interaction with CREBBP and EP300 and preventing transcriptional activation. In terms of processing, the iron and 2-oxoglutarate dependent 3-hydroxylation of asparagine is (S) stereospecific within HIF CTAD domains.

It is found in the cytoplasm. The protein resides in the nucleus. Its subcellular location is the nucleus speckle. Its activity is regulated as follows. Induced by reactive oxygen species (ROS). Functions as a master transcriptional regulator of the adaptive response to hypoxia. Under hypoxic conditions, activates the transcription of over 40 genes, including erythropoietin, glucose transporters, glycolytic enzymes, vascular endothelial growth factor, HILPDA, and other genes whose protein products increase oxygen delivery or facilitate metabolic adaptation to hypoxia. Plays an essential role in embryonic vascularization, tumor angiogenesis and pathophysiology of ischemic disease. The sequence is that of Hypoxia-inducible factor 1-alpha (hif1a) from Oncorhynchus mykiss (Rainbow trout).